We begin with the raw amino-acid sequence, 391 residues long: Inositol-tetrakisphosphate 1-kinase 2 (391 aa).

2 residues coordinate 1D-myo-inositol 1,3,4-trisphosphate: Lys90 and Lys132. ATP-binding residues include Arg167 and Lys217. The region spanning 178 to 384 is the ATP-grasp domain; the sequence is KLSDCSGSLF…FFQNLAQVKY (207 aa). The 1D-myo-inositol 1,3,4-trisphosphate site is built by His228 and Lys260. ATP is bound by residues 249–260 and Ser275; that span reads QEFVNHGGVMFK. Positions 340, 355, and 357 each coordinate Mg(2+). Asn357 contributes to the 1D-myo-inositol 1,3,4-trisphosphate binding site.

This sequence belongs to the ITPK1 family. Monomer. The cofactor is Mg(2+). As to expression, expressed in seedling roots, cotyledons, rosette leaves, cauline leaves, stems, flowers, siliques and seeds.

The enzyme catalyses 1D-myo-inositol 3,4,5,6-tetrakisphosphate + ATP = 1D-myo-inositol 1,3,4,5,6-pentakisphosphate + ADP + H(+). It carries out the reaction 1D-myo-inositol 1,3,4-trisphosphate + ATP = 1D-myo-inositol 1,3,4,5-tetrakisphosphate + ADP + H(+). It catalyses the reaction 1D-myo-inositol 1,3,4-trisphosphate + ATP = 1D-myo-inositol 1,3,4,6-tetrakisphosphate + ADP + H(+). Its function is as follows. Kinase that can phosphorylate various inositol polyphosphate such as Ins(3,4,5,6)P4 or Ins(1,3,4)P3. Phosphorylates Ins(3,4,5,6)P4 to form InsP5. This reaction is thought to have regulatory importance, since Ins(3,4,5,6)P4 is an inhibitor of plasma membrane Ca(2+)-activated Cl(-) channels, while Ins(1,3,4,5,6)P5 is not. Also phosphorylates Ins(1,3,4)P3 or a racemic mixture of Ins(1,4,6)P3 and Ins(3,4,6)P3 to form InsP4. Ins(1,3,4,6)P4 is an essential molecule in the hexakisphosphate (InsP6) pathway. Plays a role in seed coat development and lipid polyester barrier formation. The protein is Inositol-tetrakisphosphate 1-kinase 2 (ITPK2) of Arabidopsis thaliana (Mouse-ear cress).